The chain runs to 349 residues: tRNA N6-adenosine threonylcarbamoyltransferase (349 aa).

Positions 117 and 121 each coordinate Fe cation. Substrate is bound by residues 139–143 (QVSGG), D172, G185, D189, and N278. Fe cation is bound at residue D310.

It belongs to the KAE1 / TsaD family. The cofactor is Fe(2+).

It localises to the cytoplasm. The catalysed reaction is L-threonylcarbamoyladenylate + adenosine(37) in tRNA = N(6)-L-threonylcarbamoyladenosine(37) in tRNA + AMP + H(+). In terms of biological role, required for the formation of a threonylcarbamoyl group on adenosine at position 37 (t(6)A37) in tRNAs that read codons beginning with adenine. Is involved in the transfer of the threonylcarbamoyl moiety of threonylcarbamoyl-AMP (TC-AMP) to the N6 group of A37, together with TsaE and TsaB. TsaD likely plays a direct catalytic role in this reaction. The protein is tRNA N6-adenosine threonylcarbamoyltransferase of Lactobacillus acidophilus (strain ATCC 700396 / NCK56 / N2 / NCFM).